A 147-amino-acid polypeptide reads, in one-letter code: UPF0306 protein YhbP (147 aa).

Belongs to the UPF0306 family.

In Salmonella arizonae (strain ATCC BAA-731 / CDC346-86 / RSK2980), this protein is UPF0306 protein YhbP.